We begin with the raw amino-acid sequence, 221 residues long: CDP-diacylglycerol--glycerol-3-phosphate 3-phosphatidyltransferase (221 aa).

The next 5 helical transmembrane spans lie at 8–28 (ILTVLRLLAAPGVAVMFLYFH), 34–54 (WFALTLFILAAVTDFFDGYLA), 75–95 (MVVIALVIITGYSGMNPWLIL), 133–153 (AQMVAIAILFLGTGLEHLEGI), and 187–207 (ATWLGLALIWIAAALTFITGW).

It belongs to the CDP-alcohol phosphatidyltransferase class-I family.

The protein resides in the cell membrane. The catalysed reaction is a CDP-1,2-diacyl-sn-glycerol + sn-glycerol 3-phosphate = a 1,2-diacyl-sn-glycero-3-phospho-(1'-sn-glycero-3'-phosphate) + CMP + H(+). It functions in the pathway phospholipid metabolism; phosphatidylglycerol biosynthesis; phosphatidylglycerol from CDP-diacylglycerol: step 1/2. Functionally, this protein catalyzes the committed step to the synthesis of the acidic phospholipids. The protein is CDP-diacylglycerol--glycerol-3-phosphate 3-phosphatidyltransferase (pgsA) of Cereibacter sphaeroides (strain ATCC 17023 / DSM 158 / JCM 6121 / CCUG 31486 / LMG 2827 / NBRC 12203 / NCIMB 8253 / ATH 2.4.1.) (Rhodobacter sphaeroides).